A 686-amino-acid polypeptide reads, in one-letter code: Cyclic nucleotide-gated channel alpha-1 (686 aa).

At 1–165 (MKNNIINTQQ…PSGNTYYNWL (165 aa)) the chain is on the cytoplasmic side. Disordered stretches follow at residues 31–75 (ENGA…PSQR) and 87–149 (NVNN…EEKK). The segment covering 39 to 53 (SEDDDSASTSEESEN) has biased composition (acidic residues). Basic and acidic residues predominate over residues 110–124 (SKSDDKNENKNDPEK). A compositionally biased stretch (basic residues) spans 125 to 134 (KKKKKDKEKK). Over residues 135–149 (KKEEKSKDKKEEEKK) the composition is skewed to basic and acidic residues. The helical transmembrane segment at 166-187 (FCITLPVMYNWTMVIARACFDE) threads the bilayer. Topologically, residues 188 to 197 (LQSDYLEYWL) are extracellular. The chain crosses the membrane as a helical span at residues 198 to 218 (ILDYVSDIVYLIDMFVRTRTG). Topologically, residues 219 to 243 (YLEQGLLVKEELKLINKYKSNLQFK) are cytoplasmic. Residues 244 to 262 (LDVLSLIPTDLLYFKLGWN) traverse the membrane as a helical segment. Residues 263–267 (YPEIR) lie on the Extracellular side of the membrane. The chain crosses the membrane as a helical span at residues 268–286 (LNRLLRFSRMFEFFQRTET). Residues 287–293 (RTNYPNI) are Cytoplasmic-facing. Residues 291–399 (PNIFRISNLV…GNIGSMISNM (109 aa)) form an ion conduction pathway region. The chain crosses the membrane as a helical span at residues 294-317 (FRISNLVMYIVIIIHWNACVFYSI). Residues 318 to 340 (SKAIGFGNDTWVYPDINDPEFGR) are Extracellular-facing. Residue Asn325 is glycosylated (N-linked (GlcNAc...) asparagine). The next 2 membrane-spanning stretches (helical) occupy residues 341–375 (LARK…VFVV) and 376–400 (VDFL…SNMN). The interval 358–361 (TIGE) is selectivity filter. The interval 401–477 (AARAEFQARI…DTLKKVRIFA (77 aa)) is C-linker. The Cytoplasmic segment spans residues 401-686 (AARAEFQARI…GAESGPIDST (286 aa)). The cyclic nucleotide-binding domain stretch occupies residues 481-601 (AGLLVELVLK…EEKGKQILMK (121 aa)). 3',5'-cyclic GMP-binding residues include Gly541, Ser544, Arg557, and Thr558. Arg557 and Thr558 together coordinate 3',5'-cyclic AMP. Positions 619 to 673 (LEEKVTRMEGSVDLLQTRFARILAEYESMQQKLKQRLTKVEKFLKPLIDTEFSSI) form a coiled coil.

This sequence belongs to the cyclic nucleotide-gated cation channel (TC 1.A.1.5) family. CNGA1 subfamily. As to quaternary structure, forms heterotetrameric channels composed of CNGA1 and CNGB1 subunits with 3:1 stoichiometry. May also form cyclic nucleotide-activated homotetrameric channels, that are efficiently activated by saturating cGMP, but poorly activated by saturating cAMP compared to the heterotetramer with CNGB1. The channel binds Ca(2+)-bound CALM1 via CaM1 and CaM2 regions of the CNGB1 subunit; this interaction modulates the affinity of the channel for cNMPs in response to intracellular Ca(2+) levels. In terms of tissue distribution, rod cells in the retina.

The protein localises to the cell membrane. It catalyses the reaction Ca(2+)(in) = Ca(2+)(out). The catalysed reaction is Na(+)(in) = Na(+)(out). It carries out the reaction K(+)(in) = K(+)(out). The enzyme catalyses NH4(+)(in) = NH4(+)(out). It catalyses the reaction Rb(+)(in) = Rb(+)(out). The catalysed reaction is Li(+)(in) = Li(+)(out). It carries out the reaction Cs(+)(in) = Cs(+)(out). Its activity is regulated as follows. Channel opening is activated by cGMP and at a much lesser extent by cAMP. Ca(2+) binding concominantly blocks monovalent cation currents. Inhibited by L-cis-diltiazem. Functionally, pore-forming subunit of the rod cyclic nucleotide-gated channel. Mediates rod photoresponses at dim light converting transient changes in intracellular cGMP levels into electrical signals. In the dark, cGMP levels are high and keep the channel open enabling a steady inward current carried by Na(+) and Ca(2+) ions that leads to membrane depolarization and neurotransmitter release from synaptic terminals. Upon photon absorption cGMP levels decline leading to channel closure and membrane hyperpolarization that ultimately slows neurotransmitter release and signals the presence of light, the end point of the phototransduction cascade. Conducts cGMP- and cAMP-gated ion currents, with permeability for monovalent and divalent cations. The selectivity for Ca(2+) over Na(+) increases with cGMP concentrations, whereas the selectivity among monovalent ions is independent of the cGMP levels. This is Cyclic nucleotide-gated channel alpha-1 from Homo sapiens (Human).